A 211-amino-acid polypeptide reads, in one-letter code: ATP phosphoribosyltransferase (211 aa).

This sequence belongs to the ATP phosphoribosyltransferase family. Short subfamily. Heteromultimer composed of HisG and HisZ subunits.

The protein resides in the cytoplasm. The catalysed reaction is 1-(5-phospho-beta-D-ribosyl)-ATP + diphosphate = 5-phospho-alpha-D-ribose 1-diphosphate + ATP. The protein operates within amino-acid biosynthesis; L-histidine biosynthesis; L-histidine from 5-phospho-alpha-D-ribose 1-diphosphate: step 1/9. Catalyzes the condensation of ATP and 5-phosphoribose 1-diphosphate to form N'-(5'-phosphoribosyl)-ATP (PR-ATP). Has a crucial role in the pathway because the rate of histidine biosynthesis seems to be controlled primarily by regulation of HisG enzymatic activity. This chain is ATP phosphoribosyltransferase, found in Ectopseudomonas mendocina (strain ymp) (Pseudomonas mendocina).